A 281-amino-acid chain; its full sequence is Phosphatidylglycerol--prolipoprotein diacylglyceryl transferase (281 aa).

Transmembrane regions (helical) follow at residues 11-31 (IIFT…VISF), 57-77 (LLYA…IIFY), 89-109 (VFYI…AIIV), 121-141 (ILEI…AGRI), 194-214 (PTQL…IYFF), 222-242 (GSIS…IEFF), and 255-275 (IITM…IIMY). Residue Arg140 coordinates a 1,2-diacyl-sn-glycero-3-phospho-(1'-sn-glycerol).

Belongs to the Lgt family.

The protein localises to the cell inner membrane. The enzyme catalyses L-cysteinyl-[prolipoprotein] + a 1,2-diacyl-sn-glycero-3-phospho-(1'-sn-glycerol) = an S-1,2-diacyl-sn-glyceryl-L-cysteinyl-[prolipoprotein] + sn-glycerol 1-phosphate + H(+). It functions in the pathway protein modification; lipoprotein biosynthesis (diacylglyceryl transfer). Its function is as follows. Catalyzes the transfer of the diacylglyceryl group from phosphatidylglycerol to the sulfhydryl group of the N-terminal cysteine of a prolipoprotein, the first step in the formation of mature lipoproteins. This is Phosphatidylglycerol--prolipoprotein diacylglyceryl transferase from Buchnera aphidicola subsp. Acyrthosiphon pisum (strain Tuc7).